Here is a 231-residue protein sequence, read N- to C-terminus: Orotate phosphoribosyltransferase (231 aa).

5-phospho-alpha-D-ribose 1-diphosphate is bound by residues K27, 79–80 (YK), R106, K107, K110, H112, and 133–141 (DDVMTAGTA). Positions 137 and 166 each coordinate orotate.

This sequence belongs to the purine/pyrimidine phosphoribosyltransferase family. PyrE subfamily. Homodimer. Mg(2+) serves as cofactor.

The catalysed reaction is orotidine 5'-phosphate + diphosphate = orotate + 5-phospho-alpha-D-ribose 1-diphosphate. It functions in the pathway pyrimidine metabolism; UMP biosynthesis via de novo pathway; UMP from orotate: step 1/2. In terms of biological role, catalyzes the transfer of a ribosyl phosphate group from 5-phosphoribose 1-diphosphate to orotate, leading to the formation of orotidine monophosphate (OMP). The polypeptide is Orotate phosphoribosyltransferase (Bifidobacterium adolescentis (strain ATCC 15703 / DSM 20083 / NCTC 11814 / E194a)).